The primary structure comprises 351 residues: D-alanine--D-alanine ligase (351 aa).

The region spanning 135–343 (NQIFLQSGQK…MEEVFSDLIE (209 aa)) is the ATP-grasp domain. 167–222 (LETLGFPQFLKPVEGGSSVSVYKITNREQLKEKLALIFESDSKVMSQSFLTGIEVS) is an ATP binding site. Positions 298, 310, and 312 each coordinate Mg(2+).

Belongs to the D-alanine--D-alanine ligase family. Mg(2+) is required as a cofactor. Mn(2+) serves as cofactor.

It localises to the cytoplasm. The enzyme catalyses 2 D-alanine + ATP = D-alanyl-D-alanine + ADP + phosphate + H(+). Its pathway is cell wall biogenesis; peptidoglycan biosynthesis. In terms of biological role, cell wall formation. The chain is D-alanine--D-alanine ligase from Leptospira interrogans serogroup Icterohaemorrhagiae serovar copenhageni (strain Fiocruz L1-130).